The chain runs to 345 residues: MAARPLVTVYDEKYEATQSQIRLPAVFRTPIRPDLVSFIADQVRRNRRQAHAVNTKAGKQHSAESWGTGRAVARIPRVRGGGTHRSGQGAFGNMCRGGHMFAPLKVFRRWHRNVNIAQKRYAVSSAIAASGIPALLQARGHVIDQVAEVPLVVSDKVESFRKTKEAVVFLRRSHLWADIEKVYNSKRNRAGKGKLRNRQHKQKLGPVVIYGQDAECARAFRNIPGVDVMNVERLNLLKLAPGGHLGRLIIWTESAFKKLDTIYGTTVANSSQLKKGWSVPLPIMANSDFSRIIRSEEVVKAIRAPKKNPVLPKVHRNPLKKRTLLYKLNPYASILRKASKANVKK.

Ala2 is subject to N-acetylalanine.

Belongs to the universal ribosomal protein uL4 family.

The sequence is that of Large ribosomal subunit protein uL4 (rpl-4) from Caenorhabditis elegans.